Here is a 267-residue protein sequence, read N- to C-terminus: tRNA pseudouridine synthase A (267 aa).

Asp51 functions as the Nucleophile in the catalytic mechanism. Substrate is bound at residue Tyr109.

It belongs to the tRNA pseudouridine synthase TruA family. Homodimer.

The catalysed reaction is uridine(38/39/40) in tRNA = pseudouridine(38/39/40) in tRNA. Formation of pseudouridine at positions 38, 39 and 40 in the anticodon stem and loop of transfer RNAs. This is tRNA pseudouridine synthase A from Staphylococcus aureus (strain Mu3 / ATCC 700698).